Consider the following 285-residue polypeptide: Tropomyosin (285 aa).

The stretch at 1-273 (MDAIKKKMQA…KEKYREIGDD (273 aa)) forms a coiled coil.

Belongs to the tropomyosin family. Homodimer.

Its function is as follows. Tropomyosin, in association with the troponin complex, plays a central role in the calcium dependent regulation of muscle contraction. The chain is Tropomyosin from Chironomus kiiensis (Midge).